A 264-amino-acid polypeptide reads, in one-letter code: Hemin import ATP-binding protein HmuV (264 aa).

The region spanning 10-246 is the ABC transporter domain; the sequence is LQAQNLSYSI…HTLRKWYQAD (237 aa). 42-49 lines the ATP pocket; it reads GPNGAGKS.

It belongs to the ABC transporter superfamily. Heme (hemin) importer (TC 3.A.1.14.5) family. The complex is composed of two ATP-binding proteins (HmuV), two transmembrane proteins (HmuU) and a solute-binding protein (HmuT).

The protein localises to the cell inner membrane. Its function is as follows. Part of the ABC transporter complex HmuTUV involved in hemin import. Responsible for energy coupling to the transport system. This is Hemin import ATP-binding protein HmuV from Photorhabdus laumondii subsp. laumondii (strain DSM 15139 / CIP 105565 / TT01) (Photorhabdus luminescens subsp. laumondii).